The chain runs to 323 residues: RING-H2 finger protein ATL32 (323 aa).

The N-terminal stretch at 1 to 28 is a signal peptide; it reads MMTRVECFNPHRWIILHVAIIIQSKANA. Residues 47–67 form a helical membrane-spanning segment; sequence TTVFAVLVTLFFLTGLLSVYI. An RING-type; atypical zinc finger spans residues 124–166; that stretch reads CAICLNELEDHETVRLLPICNHLFHIDCIDTWLYSHATCPVCR. Positions 210–229 are disordered; that stretch reads SSEISGKFPRSNSTGHSMDR.

This sequence belongs to the RING-type zinc finger family. ATL subfamily.

Its subcellular location is the membrane. It carries out the reaction S-ubiquitinyl-[E2 ubiquitin-conjugating enzyme]-L-cysteine + [acceptor protein]-L-lysine = [E2 ubiquitin-conjugating enzyme]-L-cysteine + N(6)-ubiquitinyl-[acceptor protein]-L-lysine.. It participates in protein modification; protein ubiquitination. This Arabidopsis thaliana (Mouse-ear cress) protein is RING-H2 finger protein ATL32 (ATL32).